The sequence spans 387 residues: 17-beta-hydroxysteroid dehydrogenase type 2 (387 aa).

Residues 4–24 traverse the membrane as a helical; Signal-anchor for type II membrane protein segment; it reads FFSDTAWICLAVPTVLCGTVF. 82 to 111 provides a ligand contact to NAD(+); it reads QKAVLVTGGDCGLGHALCKYLDELGFTVFA. Position 219 (serine 219) interacts with substrate. Tyrosine 232 is a catalytic residue.

Belongs to the short-chain dehydrogenases/reductases (SDR) family. As to quaternary structure, homodimer. As to expression, expressed in placenta.

The protein localises to the endoplasmic reticulum membrane. It carries out the reaction 17beta-estradiol + NAD(+) = estrone + NADH + H(+). The catalysed reaction is testosterone + NAD(+) = androst-4-ene-3,17-dione + NADH + H(+). It catalyses the reaction 17beta-hydroxy-5alpha-androstan-3-one + NAD(+) = 5alpha-androstan-3,17-dione + NADH + H(+). The enzyme catalyses (20S)-hydroxypregn-4-en-3-one + NAD(+) = progesterone + NADH + H(+). Catalyzes the NAD-dependent oxidation of the highly active 17beta-hydroxysteroids, such as estradiol (E2), testosterone (T), and dihydrotestosterone (DHT), to their less active forms and thus regulates the biological potency of these steroids. Oxidizes estradiol to estrone, testosterone to androstenedione, and dihydrotestosterone to 5alpha-androstan-3,17-dione. Also has 20-alpha-HSD activity. This is 17-beta-hydroxysteroid dehydrogenase type 2 from Homo sapiens (Human).